Here is a 234-residue protein sequence, read N- to C-terminus: Glucosamine-6-phosphate deaminase (234 aa).

The active-site Proton acceptor; for enolization step is Asp62. Asn128 acts as the For ring-opening step in catalysis. The active-site Proton acceptor; for ring-opening step is the His130. The active-site For ring-opening step is the Glu135.

It belongs to the glucosamine/galactosamine-6-phosphate isomerase family. NagB subfamily.

It catalyses the reaction alpha-D-glucosamine 6-phosphate + H2O = beta-D-fructose 6-phosphate + NH4(+). Its pathway is amino-sugar metabolism; N-acetylneuraminate degradation; D-fructose 6-phosphate from N-acetylneuraminate: step 5/5. Its function is as follows. Catalyzes the reversible isomerization-deamination of glucosamine 6-phosphate (GlcN6P) to form fructose 6-phosphate (Fru6P) and ammonium ion. This is Glucosamine-6-phosphate deaminase from Streptococcus pyogenes serotype M49 (strain NZ131).